A 146-amino-acid polypeptide reads, in one-letter code: 3-hydroxyacyl-[acyl-carrier-protein] dehydratase FabZ (146 aa).

The active site involves H48.

It belongs to the thioester dehydratase family. FabZ subfamily.

It localises to the cytoplasm. The catalysed reaction is a (3R)-hydroxyacyl-[ACP] = a (2E)-enoyl-[ACP] + H2O. Functionally, involved in unsaturated fatty acids biosynthesis. Catalyzes the dehydration of short chain beta-hydroxyacyl-ACPs and long chain saturated and unsaturated beta-hydroxyacyl-ACPs. In Teredinibacter turnerae (strain ATCC 39867 / T7901), this protein is 3-hydroxyacyl-[acyl-carrier-protein] dehydratase FabZ.